The following is a 563-amino-acid chain: PHD finger protein EHD3 (563 aa).

Residues 1 to 46 (MGSQNRPPPPRKRQPPPPEDHLVTYKRRRSKETQPLPLMANGANSK) are disordered. PHD-type zinc fingers lie at residues 296–348 (LCPC…CSFK), 420–472 (SNLC…CWYC), and 474–524 (SCLC…CKIR).

As to quaternary structure, interacts with TRX1. In terms of tissue distribution, expressed in shoot apical meristem and leaves.

It localises to the nucleus. Probable transcription factor involved in the regulation of floral induction under long day (LD) conditions. Promotes photoperiodic flowering by repressing GHD7, a major floral repressor. Seems to function independently of HD1. The protein is PHD finger protein EHD3 of Oryza sativa subsp. japonica (Rice).